Here is a 601-residue protein sequence, read N- to C-terminus: Potassium-transporting ATPase potassium-binding subunit (601 aa).

Transmembrane regions (helical) follow at residues 3–23 (ASAW…AWPL), 62–82 (HYAL…YALQ), 132–152 (LGLS…AFAL), 179–199 (AWVL…QGVI), 283–303 (LTNL…CFAF), 314–334 (VAIL…VTAA), 367–387 (FGIS…CGAV), 397–417 (LGGM…GGAG), 419–439 (GLYG…LMIG), 459–479 (VAIL…VLAP), 523–543 (VLLA…VLAI), and 564–584 (GPLF…LNYV).

This sequence belongs to the KdpA family. In terms of assembly, the system is composed of three essential subunits: KdpA, KdpB and KdpC.

The protein resides in the cell inner membrane. Part of the high-affinity ATP-driven potassium transport (or Kdp) system, which catalyzes the hydrolysis of ATP coupled with the electrogenic transport of potassium into the cytoplasm. This subunit binds the periplasmic potassium ions and delivers the ions to the membrane domain of KdpB through an intramembrane tunnel. The sequence is that of Potassium-transporting ATPase potassium-binding subunit from Paracidovorax citrulli (strain AAC00-1) (Acidovorax citrulli).